A 411-amino-acid chain; its full sequence is Protein Brevis radix-like 2 (411 aa).

2 disordered regions span residues 10–31 (KDGG…KSLT) and 103–149 (AAPS…DDDE). Polar residues predominate over residues 20-31 (ATATPNSGKSLT). The segment covering 136–149 (GEEDYDDDDDDDDE) has biased composition (acidic residues). The BRX 1 domain maps to 161–217 (REWTAQVEPGVQITFVSIPGGAGNDLKRIRFSREMFNKWEAQRWWGENYDRVVELYN). Disordered regions lie at residues 245–294 (SRVG…VAAA) and 324–346 (AGPA…ASVS). Over residues 276–294 (SRTASSKAQLSSSSSVAAA) the composition is skewed to low complexity. The 56-residue stretch at 356–411 (TEWVEQDEPGVSITIREFGDGTRELRRVRFSRERFGEERAKVWWEQNRDRIHAQYL) folds into the BRX 2 domain.

Belongs to the BRX family.

It localises to the nucleus. The chain is Protein Brevis radix-like 2 (BRXL2) from Oryza sativa subsp. japonica (Rice).